The sequence spans 101 residues: CYC02 protein (101 aa).

One copy of the 1; approximate repeat lies at 42-64 (DAVCHHGCCRWFHHRCVRCCRSA). The 2 X approximate repeats stretch occupies residues 42-101 (DAVCHHGCCRWFHHRCVRCCRSAEEVSVSDTENNAAADAHCRHGCCRWFHGRCIRCCPSA). The stretch at 79–101 (DAHCRHGCCRWFHGRCIRCCPSA) is one 2; approximate repeat.

It belongs to the GRP family.

Its function is as follows. May be involved in the control of the cell cycle at the G1/S start transition. The sequence is that of CYC02 protein (CYC02) from Catharanthus roseus (Madagascar periwinkle).